Here is a 98-residue protein sequence, read N- to C-terminus: Acylphosphatase (98 aa).

The Acylphosphatase-like domain occupies 12–98 (TYYVRVRGVV…DKRFERFQQH (87 aa)). Active-site residues include Arg27 and Asn45.

The protein belongs to the acylphosphatase family.

It catalyses the reaction an acyl phosphate + H2O = a carboxylate + phosphate + H(+). This Burkholderia mallei (strain NCTC 10247) protein is Acylphosphatase (acyP).